The primary structure comprises 420 residues: Vasopressin V1a receptor (420 aa).

The segment at 1-45 (MSFPRGSYDPAASNSSPRWPLSAEDANSSREAAGHQKGSDPSGDV) is disordered. The Extracellular segment spans residues 1–54 (MSFPRGSYDPAASNSSPRWPLSAEDANSSREAAGHQKGSDPSGDVRNEELAKLE). N27 is a glycosylation site (N-linked (GlcNAc...) asparagine). Over residues 32–45 (AAGHQKGSDPSGDV) the composition is skewed to basic and acidic residues. A helical membrane pass occupies residues 55 to 75 (IAVLAVIFVVAVLGNSSVLLA). Over 76–92 (LHRTPRKTSRMHLFIRH) the chain is Cytoplasmic. The chain crosses the membrane as a helical span at residues 93–113 (LSLADLAVAFFQVLPQLCWDI). Topologically, residues 114–125 (TYRFRGPDWLCR) are extracellular. C124 and C205 are joined by a disulfide. Residues 126–146 (VVKHLQVFAMFASAYMLVVMT) form a helical membrane-spanning segment. Residues 147–168 (ADRYIAVCHPLKTLQQPARRSR) are Cytoplasmic-facing. A helical transmembrane segment spans residues 169 to 189 (LMIAASWVLSFLLSTPQYFIF). At 190–225 (SMIEIEVNNGTKTQDCWATFIQPWGTRAYVTWMTSG) the chain is on the extracellular side. N198 carries an N-linked (GlcNAc...) asparagine glycan. Residues 226 to 246 (VFVVPVVILGTCYGFICYHIW) form a helical membrane-spanning segment. Residues 247–294 (RNVRGKTASRQSKGSGEDVAPFHKGLLVTPCVSSVKTISRAKIRTVKM) lie on the Cytoplasmic side of the membrane. The chain crosses the membrane as a helical span at residues 295–315 (TFVIVTAYILCWAPFFIVQMW). Residues 316 to 331 (SVWDDNFIWTDSENPS) lie on the Extracellular side of the membrane. Residues 332-352 (ITITALLASLNSCCNPWIYMF) traverse the membrane as a helical segment. Topologically, residues 353–420 (FSGHLLQDCV…RSIRFIPVST (68 aa)) are cytoplasmic. S-palmitoyl cysteine attachment occurs at residues C367 and C368. Positions 379–411 (DSDNMSRRQTSYSNNRSPTNSTGTWKDSPKSSR) are disordered. Residues 385-403 (RRQTSYSNNRSPTNSTGTW) show a composition bias toward polar residues. Phosphoserine is present on S406.

The protein belongs to the G-protein coupled receptor 1 family. Vasopressin/oxytocin receptor subfamily.

The protein localises to the cell membrane. Its function is as follows. Receptor for arginine vasopressin. The activity of this receptor is mediated by G proteins which activate a phosphatidyl-inositol-calcium second messenger system. Involved in social memory formation. The chain is Vasopressin V1a receptor (Avpr1a) from Microtus montanus (Montane vole).